A 62-amino-acid chain; its full sequence is Mastoparan-AF (62 aa).

Residues 1–25 (MKNTILILFTAFIALLGFFGMSAEA) form the signal peptide. 4 AXPX repeats span residues 25 to 28 (ADPI), 29 to 32 (ADPI), 33 to 36 (ADPI), and 43 to 46 (ADPE). A propeptide spanning residues 26–47 (DPIADPIADPISGPNAEADPEA) is cleaved from the precursor. Residue F61 is modified to Phenylalanine amide.

It belongs to the MCD family. Mastoparan subfamily. Expressed by the venom gland.

The protein resides in the secreted. Its subcellular location is the target cell membrane. In terms of biological role, antimicrobial and mast cell degranulating peptide. Has broad spectrum antibacterial activity against both Gram-positive and Gram-negative bacteria (S.aureus MIC=16-32 ug/ml, S.xylosus MIC=1.5 ug/ml, S.alactolyticus MIC=8 ug/ml, C.koseri MIC=4 ug/ml, E.coli MIC=4-32 ug/ml, K.pneumoniae MIC=32 ug/ml, P.aerugiosa MIC=96 ug/ml, S.choleraesuis MIC=16 ug/ml, S.typhimurium MIC=32 ug/ml, V.parahamelytics MIC=16 ug/ml). Is also active on multi-antibiotic resistant hemolytic E.coli O157:H7. Acts by affecting membrane permeability. On E.coli O157:H7, acts through multiple membrane disruption patterns, including large perforations (full opening) at apical ends (hollow tubes), vesicle budding, forming dents, and membrane corrugation and invagination leading to irregular pits or pores. Exerts 40% lower membrane permeabilization activities on E.coli O157:H7 than on the non-pathogen E.coli BL21. Shows little hemolytic activities on sheep, chicken and human erythrocytes, but with a higher activity on chicken erythrocytes. Its mast cell degranulation activity may be related to the activation of G-protein coupled receptors in mast cells as well as interaction with other proteins located in cell endosomal membranes in the mast cells. The chain is Mastoparan-AF from Vespa affinis (Lesser banded hornet).